The sequence spans 98 residues: uncharacterized protein (98 aa).

This is an uncharacterized protein from Bacillus subtilis (strain 168).